The chain runs to 554 residues: Phenylalanine--tRNA ligase beta subunit (554 aa).

The B5 domain occupies 274–351; the sequence is LTPDSAEITI…INYGYENFNG (78 aa). Mg(2+)-binding residues include aspartate 329, aspartate 335, and aspartate 339.

This sequence belongs to the phenylalanyl-tRNA synthetase beta subunit family. Type 2 subfamily. In terms of assembly, tetramer of two alpha and two beta subunits. Mg(2+) is required as a cofactor.

It is found in the cytoplasm. The catalysed reaction is tRNA(Phe) + L-phenylalanine + ATP = L-phenylalanyl-tRNA(Phe) + AMP + diphosphate + H(+). The polypeptide is Phenylalanine--tRNA ligase beta subunit (Methanococcus aeolicus (strain ATCC BAA-1280 / DSM 17508 / OCM 812 / Nankai-3)).